The following is a 311-amino-acid chain: Geranylgeranyl transferase type-2 subunit alpha (311 aa).

Positions 12–43 (EKAKAQRLKELEKIESYNKLVKSFEELREKQN) form a coiled coil. 5 PFTA repeats span residues 49 to 82 (ISLS…TETK), 93 to 126 (NEMK…DNCD), 129 to 162 (REMK…NIKL), 164 to 197 (DELK…YKEP), and 206 to 239 (EEFE…KSIP).

Belongs to the protein prenyltransferase subunit alpha family. Heterodimer of an alpha and a beta subunit.

It catalyses the reaction geranylgeranyl diphosphate + L-cysteinyl-[protein] = S-geranylgeranyl-L-cysteinyl-[protein] + diphosphate. Its function is as follows. Catalyzes the transfer of a geranylgeranyl moiety from geranylgeranyl diphosphate to proteins with a C-terminal sequence motif -XCC or -XCXC, where both cysteines may become modified. The sequence is that of Geranylgeranyl transferase type-2 subunit alpha (rabggta) from Dictyostelium discoideum (Social amoeba).